We begin with the raw amino-acid sequence, 348 residues long: Rhodopsin (348 aa).

Residue Met-1 is modified to N-acetylmethionine. Topologically, residues 1–36 (MNGTEGLNFYVPFSNKTGVVRSPFEYPQYYLAEPWQ) are extracellular. N-linked (GlcNAc...) asparagine glycosylation is found at Asn-2 and Asn-15. Residues 37 to 61 (FSVLAAYMFLLIVLGFPINFLTLYV) traverse the membrane as a helical segment. Residues 62–73 (TVQHKKLRTPLN) lie on the Cytoplasmic side of the membrane. Residues 74–96 (YIPLNLAVANLFMVFGGFTTTLY) form a helical membrane-spanning segment. Over 97–110 (TSLHAYFVFGPTGC) the chain is Extracellular. A disulfide bridge links Cys-110 with Cys-187. Residues 111–133 (NLEGFFATLGGEIALWSLVVLAI) form a helical membrane-spanning segment. The short motif at 134–136 (ERY) is the 'Ionic lock' involved in activated form stabilization element. Topologically, residues 134–152 (ERYVVVCKPMSNFRFGENH) are cytoplasmic. Residues 153 to 173 (AIMGLALTWVMAMACAAPPLV) form a helical membrane-spanning segment. The Extracellular portion of the chain corresponds to 174 to 202 (GWSRYIPEGMQCSCGIDYYTSRQEVNNES). Residue Glu-201 participates in Zn(2+) binding. The helical transmembrane segment at 203–224 (FVIYMFVVHFTIPLVIIFFCYG) threads the bilayer. Residues 225-252 (QLVFTVKEAAAQQQESATTQKAEKEVTR) are Cytoplasmic-facing. The helical transmembrane segment at 253-274 (MVIIMVVAFLICWVPYASVAFY) threads the bilayer. Residues 275–286 (IFTHQGSDFGPI) lie on the Extracellular side of the membrane. Residue Gln-279 coordinates Zn(2+). A helical transmembrane segment spans residues 287 to 308 (FMTIPSFFAKSSSIYNPVIYIM). N6-(retinylidene)lysine is present on Lys-296. The Cytoplasmic portion of the chain corresponds to 309–348 (MNKQLRNCMLTTLCCGRNPLGDDEASTTASKTETSQVAPA). 2 S-palmitoyl cysteine lipidation sites follow: Cys-322 and Cys-323. An interaction with SAG region spans residues 330–348 (DDEASTTASKTETSQVAPA). Ser-334 carries the phosphoserine modification. Thr-335 and Thr-336 each carry phosphothreonine. Ser-338 carries the post-translational modification Phosphoserine. A phosphothreonine mark is found at Thr-340 and Thr-342. Phosphoserine is present on Ser-343.

This sequence belongs to the G-protein coupled receptor 1 family. Opsin subfamily. Homodimer. May form a complex composed of RHO, GRK1 and RCVRN in a Ca(2+)-dependent manner; RCVRN prevents the interaction between GRK1 and RHO. Interacts with GRK1. Interacts (phosphorylated form) with SAG. Interacts with GNAT1. Interacts with GNAT3. SAG and G-proteins compete for a common binding site. Interacts with PRCD; the interaction promotes PRCD stability. Forms a complex with ASAP1 and ARF4. Forms a complex with ASAP1, RAB11A, Rabin8/RAB3IP, ARF4 and RAB11FIP3; the complex regulates Golgi-to-cilia rhodopsin/RHO transport in photoreceptors. Phosphorylated on some or all of the serine and threonine residues present in the C-terminal region. Post-translationally, contains one covalently linked retinal chromophore. Upon light absorption, the covalently bound 11-cis-retinal is converted to all-trans-retinal. After hydrolysis of the Schiff base and release of the covalently bound all-trans-retinal, active rhodopsin is regenerated by binding of a fresh molecule of 11-cis-retinal.

It is found in the membrane. Its subcellular location is the cell projection. It localises to the cilium. The protein resides in the photoreceptor outer segment. Its function is as follows. Photoreceptor required for image-forming vision at low light intensity. Required for photoreceptor cell viability after birth. Light-induced isomerization of 11-cis to all-trans retinal triggers a conformational change that activates signaling via G-proteins. Subsequent receptor phosphorylation mediates displacement of the bound G-protein alpha subunit by the arrestin SAG and terminates signaling. The sequence is that of Rhodopsin (RHO) from Globicephala melas (Long-finned pilot whale).